A 1071-amino-acid polypeptide reads, in one-letter code: Carbamoyl phosphate synthase pyrimidine-specific large chain (1071 aa).

The interval Met1–Glu401 is carboxyphosphate synthetic domain. Residues Arg129, Arg169, Gly175, Gly176, Lys208, Ile210, Glu215, Gly241, Ile242, His243, Gln284, and Glu298 each coordinate ATP. Residues Arg133–Val327 enclose the ATP-grasp 1 domain. Residues Gln284, Glu298, and Asn300 each contribute to the Mg(2+) site. Mn(2+) contacts are provided by Gln284, Glu298, and Asn300. Residues Ala402 to Ser546 are oligomerization domain. A carbamoyl phosphate synthetic domain region spans residues Val547–Gly929. Residues Glu671–Leu861 form the ATP-grasp 2 domain. Residues Arg707, Arg746, Leu748, Glu752, Gly777, Val778, His779, Ser780, Gln820, and Glu832 each contribute to the ATP site. Residues Gln820, Glu832, and Asn834 each contribute to the Mg(2+) site. Residues Gln820, Glu832, and Asn834 each contribute to the Mn(2+) site. One can recognise an MGS-like domain in the interval Ile930–Ile1071. The interval Ile930–Ile1071 is allosteric domain.

It belongs to the CarB family. Composed of two chains; the small (or glutamine) chain promotes the hydrolysis of glutamine to ammonia, which is used by the large (or ammonia) chain to synthesize carbamoyl phosphate. Tetramer of heterodimers (alpha,beta)4. Interacts with BrxC. The cofactor is Mg(2+). It depends on Mn(2+) as a cofactor.

The enzyme catalyses hydrogencarbonate + L-glutamine + 2 ATP + H2O = carbamoyl phosphate + L-glutamate + 2 ADP + phosphate + 2 H(+). It catalyses the reaction hydrogencarbonate + NH4(+) + 2 ATP = carbamoyl phosphate + 2 ADP + phosphate + 2 H(+). Its pathway is amino-acid biosynthesis; L-arginine biosynthesis; carbamoyl phosphate from bicarbonate: step 1/1. It functions in the pathway pyrimidine metabolism; UMP biosynthesis via de novo pathway; (S)-dihydroorotate from bicarbonate: step 1/3. Small subunit of the glutamine-dependent carbamoyl phosphate synthetase (CPSase). CPSase catalyzes the formation of carbamoyl phosphate from the ammonia moiety of glutamine, carbonate, and phosphate donated by ATP, constituting the first step of the biosynthetic pathway leading to pyrimidine nucleotides. The large subunit (synthetase) binds the substrates ammonia (free or transferred from glutamine from the small subunit), hydrogencarbonate and ATP and carries out an ATP-coupled ligase reaction, activating hydrogencarbonate by forming carboxy phosphate which reacts with ammonia to form carbamoyl phosphate. The sequence is that of Carbamoyl phosphate synthase pyrimidine-specific large chain (pyrAB) from Bacillus subtilis (strain 168).